A 456-amino-acid polypeptide reads, in one-letter code: Hydroxyproline dehydrogenase (456 aa).

N6-acetyllysine is present on residues Lys310 and Lys320.

It belongs to the proline oxidase family. Requires FAD as cofactor.

It catalyses the reaction trans-4-hydroxy-L-proline + a quinone = (3R,5S)-1-pyrroline-3-hydroxy-5-carboxylate + a quinol + H(+). It carries out the reaction L-proline + a quinone = (S)-1-pyrroline-5-carboxylate + a quinol + H(+). Dehydrogenase that converts trans-4-L-hydroxyproline to delta-1-pyrroline-3-hydroxy-5-carboxylate (Hyp) using ubiquinone-10 as the terminal electron acceptor. Can also use proline as a substrate but with a very much lower efficiency. Does not react with other diastereomers of Hyp: trans-4-D-hydroxyproline and cis-4-L-hydroxyproline. Ubiquininone analogs such as menadione, duroquinone and ubiquinone-1 react more efficiently than oxygen as the terminal electron acceptor during catalysis. This chain is Hydroxyproline dehydrogenase, found in Rattus norvegicus (Rat).